The sequence spans 867 residues: Glutamate receptor 1.2 (867 aa).

A signal peptide spans 1–27 (MVRICIQTPILLSFLLVLLFFISNCFA). Residues 28–560 (SSQNNDDDKR…SMWVFFQPLT (533 aa)) are Extracellular-facing. N-linked (GlcNAc...) asparagine glycans are attached at residues asparagine 301, asparagine 400, asparagine 496, and asparagine 499. The helical transmembrane segment at 561 to 581 (PNLWITSAAFFVLTGIIVWLI) threads the bilayer. The Cytoplasmic segment spans residues 582–590 (ERAENKEFQ). Residues 591–611 (GSWPQQIGVVIWFGFSTLVYA) form a helical membrane-spanning segment. Topologically, residues 612-622 (HREKLQHNLSR) are cytoplasmic. Residues 623–643 (FVVTVWVFAVLILVTSYTATL) traverse the membrane as a helical segment. Residues 644–792 (TSMMTVQQIR…NPITLYRFRG (149 aa)) lie on the Extracellular side of the membrane. Asparagine 676, asparagine 688, asparagine 699, and asparagine 748 each carry an N-linked (GlcNAc...) asparagine glycan. Residues 793-813 (LFMITGVSFAFALAVLLILWL) form a helical membrane-spanning segment. Topologically, residues 814-867 (RERWEILVNSVNIYFSQRLRHFRILFTRTIHPSPLGLDNPIGENAVQMAQRNRR) are cytoplasmic.

The protein belongs to the glutamate-gated ion channel (TC 1.A.10.1) family. As to quaternary structure, may form heteromers. In terms of tissue distribution, expressed predominantly in roots and siliques.

The protein resides in the membrane. Functionally, glutamate-gated receptor that probably acts as a non-selective cation channel. May be involved in light-signal transduction and calcium homeostasis via the regulation of calcium influx into cells. The polypeptide is Glutamate receptor 1.2 (GLR1.2) (Arabidopsis thaliana (Mouse-ear cress)).